The following is a 184-amino-acid chain: Tumor necrosis factor alpha-induced protein 8-like protein 2 (184 aa).

A Phosphoserine modification is found at serine 3.

Belongs to the TNFAIP8 family. TNFAIP8L2 subfamily. May interact with CASP8; however, such result is unclear since could not reproduce the interaction with CASP8. Interacts with RAC1. Phosphorylated by TAK1/MAP3K7; this phosphorylation triggers association with BTRC and subsequent ubiquitination and degradation. Post-translationally, ubiquitinated in a BTRC-depdent manner; leading to degradation mediated through the proteasome pathway. Expressed in thymus, spleen, lymph node and small intestine, but not in liver, heart, muscle, testis, spinal cord or brain. Up-regulated in the spinal cord of mice with experimental autoimmune encephalomyelitis. Constitutively expressed by macrophages, B and T-lymphocytes at various developmental stages.

It localises to the cytoplasm. Its subcellular location is the nucleus. The protein localises to the lysosome. In terms of biological role, acts as a negative regulator of innate and adaptive immunity by maintaining immune homeostasis. Plays a regulatory role in the Toll-like signaling pathway by determining the strength of LPS-induced signaling and gene expression. Inhibits TCR-mediated T-cell activation and negatively regulate T-cell function to prevent hyperresponsiveness. Also inhibits autolysosome formation via negatively modulating MTOR activation by interacting with RAC1 and promoting the disassociation of the RAC1-MTOR complex. Plays an essential role in NK-cell biology by acting as a checkpoint and displaying an expression pattern correlating with NK-cell maturation process and by negatively regulating NK-cell maturation and antitumor immunity. Mechanistically, suppresses IL-15-triggered mTOR activity in NK-cells. This chain is Tumor necrosis factor alpha-induced protein 8-like protein 2 (Tnfaip8l2), found in Mus musculus (Mouse).